A 532-amino-acid chain; its full sequence is Variant surface glycoprotein ILTAT 1.23 (532 aa).

The signal sequence occupies residues 1 to 23; that stretch reads MFKNINAAVLLLILSTRNDYANA. Asparagine 66 carries an N-linked (GlcNAc...) asparagine glycan. 2 disordered regions span residues 79 to 107 and 408 to 504; these read APKK…RNHA and MQAG…DQDK. N-linked (GlcNAc...) asparagine glycosylation occurs at asparagine 419. Residues 427–445 show a composition bias toward basic and acidic residues; that stretch reads CKWEEKDGKDGKCVADDSK. The segment covering 450 to 470 has biased composition (low complexity); the sequence is GNAPAGAGDGTAGTTTTPNCA. Basic and acidic residues-rich tracts occupy residues 472 to 484 and 494 to 504; these read HTDK…ENKG and KGKEGESDQDK. Residue asparagine 509 is glycosylated (N-linked (GlcNAc...) asparagine). A lipid anchor (GPI-anchor amidated asparagine) is attached at asparagine 509. Positions 510-532 are cleaved as a propeptide — removed in mature form; that stretch reads GSFLAKKKFALSVVSAAFTALLF.

The protein resides in the cell membrane. Its function is as follows. VSG forms a coat on the surface of the parasite. The trypanosome evades the immune response of the host by expressing a series of antigenically distinct VSGs from an estimated 1000 VSG genes. This Trypanosoma brucei brucei protein is Variant surface glycoprotein ILTAT 1.23.